Reading from the N-terminus, the 603-residue chain is DNA mismatch repair protein MutL (603 aa).

Basic and acidic residues predominate over residues 337 to 347 (ISKKQKEDQKS). The segment at 337–383 (ISKKQKEDQKSEQIQMSFEENKPVKETPTLFSKPTIPEYVPSDEDAP) is disordered.

The protein belongs to the DNA mismatch repair MutL/HexB family.

Functionally, this protein is involved in the repair of mismatches in DNA. It is required for dam-dependent methyl-directed DNA mismatch repair. May act as a 'molecular matchmaker', a protein that promotes the formation of a stable complex between two or more DNA-binding proteins in an ATP-dependent manner without itself being part of a final effector complex. This is DNA mismatch repair protein MutL from Listeria monocytogenes serotype 4b (strain F2365).